The primary structure comprises 270 residues: Regulatory protein RecX (270 aa).

This sequence belongs to the RecX family.

The protein localises to the cytoplasm. In terms of biological role, modulates RecA activity. This chain is Regulatory protein RecX, found in Bacillus cereus (strain AH187).